Reading from the N-terminus, the 231-residue chain is 7-cyano-7-deazaguanine synthase (231 aa).

8-18 serves as a coordination point for ATP; it reads FSGGQDSTTCL. Cys188, Cys197, Cys200, and Cys203 together coordinate Zn(2+).

It belongs to the QueC family. Zn(2+) serves as cofactor.

It carries out the reaction 7-carboxy-7-deazaguanine + NH4(+) + ATP = 7-cyano-7-deazaguanine + ADP + phosphate + H2O + H(+). It functions in the pathway purine metabolism; 7-cyano-7-deazaguanine biosynthesis. Catalyzes the ATP-dependent conversion of 7-carboxy-7-deazaguanine (CDG) to 7-cyano-7-deazaguanine (preQ(0)). This chain is 7-cyano-7-deazaguanine synthase, found in Escherichia coli O157:H7.